The sequence spans 826 residues: Beta-galactosidase 7 (826 aa).

Residues 1-25 form the signal peptide; it reads MKMKHFTRLLSLFFILITSLSLAKS. N154 is a glycosylation site (N-linked (GlcNAc...) asparagine). E184 functions as the Proton donor in the catalytic mechanism. The Nucleophile role is filled by E253. 8 N-linked (GlcNAc...) asparagine glycosylation sites follow: N254, N351, N380, N491, N665, N706, N797, and N801. One can recognise an SUEL-type lectin domain in the interval 740 to 826; sequence AHEHNKVELS…PKKLAVELEC (87 aa).

This sequence belongs to the glycosyl hydrolase 35 family. As to expression, expressed in flowers.

The protein resides in the secreted. It localises to the extracellular space. Its subcellular location is the apoplast. It catalyses the reaction Hydrolysis of terminal non-reducing beta-D-galactose residues in beta-D-galactosides.. This is Beta-galactosidase 7 (BGAL7) from Arabidopsis thaliana (Mouse-ear cress).